A 214-amino-acid chain; its full sequence is tRNA (guanine-N(7)-)-methyltransferase (214 aa).

The S-adenosyl-L-methionine site is built by Glu43, Glu68, Asp95, and Asp117. Asp117 is a catalytic residue. Substrate contacts are provided by residues Lys121, Asp153, and 190 to 193 (TEYE).

Belongs to the class I-like SAM-binding methyltransferase superfamily. TrmB family.

The enzyme catalyses guanosine(46) in tRNA + S-adenosyl-L-methionine = N(7)-methylguanosine(46) in tRNA + S-adenosyl-L-homocysteine. It functions in the pathway tRNA modification; N(7)-methylguanine-tRNA biosynthesis. Functionally, catalyzes the formation of N(7)-methylguanine at position 46 (m7G46) in tRNA. This chain is tRNA (guanine-N(7)-)-methyltransferase, found in Staphylococcus haemolyticus (strain JCSC1435).